The primary structure comprises 440 residues: Transposon Ty1-JR2 Gag polyprotein (440 aa).

Low complexity predominate over residues 1-16; that stretch reads MESQQLSQHSHISHGS. Disordered stretches follow at residues 1–93, 126–173, and 352–440; these read MESQ…MMTQ, PQSQ…RPPP, and GSRN…PETY. 3 stretches are compositionally biased toward polar residues: residues 48-60, 71-93, and 127-152; these read TKAN…TPAS, SPQT…MMTQ, and QSQF…GNTF. Residues 153–165 show a composition bias toward low complexity; sequence TDSSSADSDMTST. The segment at 299 to 401 is RNA-binding; sequence NNGIHINNKV…NSKSKTARAH (103 aa). Residues 402–418 show a composition bias toward low complexity; it reads NVSTSNNSPSTDNDSIS. A Phosphoserine modification is found at serine 416. The span at 419–428 shows a compositional bias: polar residues; that stretch reads KSTTEPIQLN. Positions 429-440 are enriched in basic and acidic residues; the sequence is NKHDLHLRPETY.

In terms of assembly, homotrimer.

The protein localises to the cytoplasm. Functionally, capsid protein (CA) is the structural component of the virus-like particle (VLP), forming the shell that encapsulates the retrotransposons dimeric RNA genome. The particles are assembled from trimer-clustered units and there are holes in the capsid shells that allow for the diffusion of macromolecules. CA also has nucleocapsid-like chaperone activity, promoting primer tRNA(i)-Met annealing to the multipartite primer-binding site (PBS), dimerization of Ty1 RNA and initiation of reverse transcription. The chain is Transposon Ty1-JR2 Gag polyprotein (TY1A-JR2) from Saccharomyces cerevisiae (strain ATCC 204508 / S288c) (Baker's yeast).